Reading from the N-terminus, the 789-residue chain is Trimethylamine-oxide aldolase (789 aa).

The protein in the C-terminal section; belongs to the GcvT family.

The enzyme catalyses trimethylamine N-oxide + H(+) = dimethylamine + formaldehyde. In terms of biological role, catalyzes the conversion of trimethylamine N-oxide (TMAO) to dimethylamine (DMA) and formaldehyde. The sequence is that of Trimethylamine-oxide aldolase from Ruegeria pomeroyi (strain ATCC 700808 / DSM 15171 / DSS-3) (Silicibacter pomeroyi).